The sequence spans 393 residues: Probable acetyl-CoA acyltransferase (393 aa).

Residue Cys88 is the Acyl-thioester intermediate of the active site. Active-site proton acceptor residues include His349 and Cys378.

It belongs to the thiolase-like superfamily. Thiolase family.

It localises to the cytoplasm. It carries out the reaction 2 acetyl-CoA = acetoacetyl-CoA + CoA. The protein is Probable acetyl-CoA acyltransferase of Staphylococcus aureus (strain NCTC 8325 / PS 47).